A 140-amino-acid polypeptide reads, in one-letter code: Histone H2B (140 aa).

The tract at residues 1–47 (MPPKAQKTPTTGGKAPAGKAPVEKKEAGKKTAAPSGEKKKRTKTRKE) is disordered. The residue at position 7 (lysine 7) is an N6-acetyllysine; alternate. Residue lysine 7 forms a Glycyl lysine isopeptide (Lys-Gly) (interchain with G-Cter in SUMO); alternate linkage. N6-acetyllysine is present on lysine 14. Lysine 24 carries the N6-acetyllysine; alternate modification. A Glycyl lysine isopeptide (Lys-Gly) (interchain with G-Cter in SUMO); alternate cross-link involves residue lysine 24. A Glycyl lysine isopeptide (Lys-Gly) (interchain with G-Cter in SUMO) cross-link involves residue lysine 25. A Glycyl lysine isopeptide (Lys-Gly) (interchain with G-Cter in ubiquitin) cross-link involves residue lysine 134.

Belongs to the histone H2B family. The nucleosome is a histone octamer containing two molecules each of H2A, H2B, H3 and H4 assembled in one H3-H4 heterotetramer and two H2A-H2B heterodimers. The octamer wraps approximately 147 bp of DNA. Monoubiquitinated by BRE1 to form H2BK123ub1. H2BK123ub1 gives a specific tag for epigenetic transcriptional activation and is also prerequisite for H3K4me and H3K79me formation. H2BK123ub1 also modulates the formation of double-strand breaks during meiosis and is a prerequisite for DNA-damage checkpoint activation. Post-translationally, acetylated by GCN5 to form H2BK11ac and H2BK16ac. H2BK16ac can also be formed by ESA1. Acetylation of N-terminal lysines and particularly formation of H2BK11acK16ac has a positive effect on transcription. In terms of processing, sumoylation to form H2BK6su and probably also H2BK16su or H2BK17su, occurs preferentially near the telomeres and represses gene transcription.

The protein resides in the nucleus. Its subcellular location is the chromosome. Core component of nucleosome. Nucleosomes wrap and compact DNA into chromatin, limiting DNA accessibility to the cellular machineries which require DNA as a template. Histones thereby play a central role in transcription regulation, DNA repair, DNA replication and chromosomal stability. DNA accessibility is regulated via a complex set of post-translational modifications of histones, also called histone code, and nucleosome remodeling. This chain is Histone H2B (HTB1), found in Phaeosphaeria nodorum (strain SN15 / ATCC MYA-4574 / FGSC 10173) (Glume blotch fungus).